The sequence spans 590 residues: Protein ecdysoneless homolog (590 aa).

The segment at 445–464 (EDFYGVKNSDTDTDSDSLAD) is disordered. A compositionally biased stretch (acidic residues) spans 455 to 464 (TDTDSDSLAD).

It belongs to the ECD family.

It localises to the cytoplasm. It is found in the nucleus. Its function is as follows. Involved in the regulation of carbohydrate metabolism. May act as a transcription factor. The chain is Protein ecdysoneless homolog from Schizosaccharomyces pombe (strain 972 / ATCC 24843) (Fission yeast).